A 637-amino-acid polypeptide reads, in one-letter code: MGKKIRLTTAQALIKFLNQQYIHVDGEETPFVEGIFTIFGHGNVVGIGQALEQDAGHLKVFQGKNEQGMAHAAMAYSKQMLRRKIYAVSTSVGPGAANLVAAAGTALANNIPVLLIPADTFATRQPDPVLQQVEQEYSAAITTNDALKPVSRYWDRITRPEQLMSSLIRAFEVMTDPAKAGPATICISQDVEGEAYDFDESFFEKRVHYVDRKEPSERELKGAAELIKSSKKPLILVGGGAKYSGARDELIAMSEAYNIPLVETQAGKSTVEADFANNLGGMGITGTLAANKAARGADLIIGIGTRYTDFATSSKTAFDFDNAKFLNINVSRMQAYKLDAFQVVADAKVTLGKLHGLLEGYKSEFGSTIKELKDEWLAERDRLSKVTFKRENFTPEIKDHFSQDILNEYADVLQTELPQTTALLAINETVDPDSVVICSAGSLPGDLQRLWHSNVPNTYHLEYGYSCMGYEVSGTLGLKLAHPDREVYSLVGDGSFLMLHSELITAIQYNKKINVLLFDNSGFGCINNLQMDHGNGSYYCEFRTADNQILNVDYAKVAEGYGAKTYKANTIEELKAALEDAKKQDVSTLIEMKVLPKTMTDGYDSWWHVGVAEVSEQESVQKAYKAKEKMLESAKQY.

Glutamate 66 contributes to the thiamine diphosphate binding site. Residues 442 to 522 are thiamine pyrophosphate binding; that stretch reads SLPGDLQRLW…INVLLFDNSG (81 aa). 2 residues coordinate Mg(2+): aspartate 493 and asparagine 520.

It belongs to the TPP enzyme family. Requires Mg(2+) as cofactor. Thiamine diphosphate is required as a cofactor.

It carries out the reaction 3D-3,5/4-trihydroxycyclohexane-1,2-dione + H2O = 5-deoxy-D-glucuronate + H(+). It functions in the pathway polyol metabolism; myo-inositol degradation into acetyl-CoA; acetyl-CoA from myo-inositol: step 3/7. In terms of biological role, involved in the cleavage of the C1-C2 bond of 3D-(3,5/4)-trihydroxycyclohexane-1,2-dione (THcHDO) to yield 5-deoxy-glucuronate (5DG). This chain is 3D-(3,5/4)-trihydroxycyclohexane-1,2-dione hydrolase, found in Bacillus licheniformis (strain ATCC 14580 / DSM 13 / JCM 2505 / CCUG 7422 / NBRC 12200 / NCIMB 9375 / NCTC 10341 / NRRL NRS-1264 / Gibson 46).